Reading from the N-terminus, the 435-residue chain is Methylenetetrahydrofolate--tRNA-(uracil-5-)-methyltransferase TrmFO (435 aa).

7–12 (GAGLAG) contacts FAD.

This sequence belongs to the MnmG family. TrmFO subfamily. FAD is required as a cofactor.

The protein resides in the cytoplasm. The enzyme catalyses uridine(54) in tRNA + (6R)-5,10-methylene-5,6,7,8-tetrahydrofolate + NADH + H(+) = 5-methyluridine(54) in tRNA + (6S)-5,6,7,8-tetrahydrofolate + NAD(+). It carries out the reaction uridine(54) in tRNA + (6R)-5,10-methylene-5,6,7,8-tetrahydrofolate + NADPH + H(+) = 5-methyluridine(54) in tRNA + (6S)-5,6,7,8-tetrahydrofolate + NADP(+). In terms of biological role, catalyzes the folate-dependent formation of 5-methyl-uridine at position 54 (M-5-U54) in all tRNAs. The protein is Methylenetetrahydrofolate--tRNA-(uracil-5-)-methyltransferase TrmFO of Thermotoga neapolitana (strain ATCC 49049 / DSM 4359 / NBRC 107923 / NS-E).